Consider the following 477-residue polypeptide: Ribulose bisphosphate carboxylase large chain (477 aa).

The propeptide occupies 1-2 (MS). Pro-3 is subject to N-acetylproline. Lys-14 is modified (N6,N6,N6-trimethyllysine). Asn-123 and Thr-173 together coordinate substrate. The active-site Proton acceptor is the Lys-175. Residue Lys-177 coordinates substrate. Mg(2+)-binding residues include Lys-201, Asp-203, and Glu-204. N6-carboxylysine is present on Lys-201. Catalysis depends on His-294, which acts as the Proton acceptor. Positions 295, 327, and 379 each coordinate substrate.

Belongs to the RuBisCO large chain family. Type I subfamily. In terms of assembly, heterohexadecamer of 8 large chains and 8 small chains; disulfide-linked. The disulfide link is formed within the large subunit homodimers. It depends on Mg(2+) as a cofactor. Post-translationally, the disulfide bond which can form in the large chain dimeric partners within the hexadecamer appears to be associated with oxidative stress and protein turnover.

The protein localises to the plastid. The protein resides in the chloroplast. It carries out the reaction 2 (2R)-3-phosphoglycerate + 2 H(+) = D-ribulose 1,5-bisphosphate + CO2 + H2O. The enzyme catalyses D-ribulose 1,5-bisphosphate + O2 = 2-phosphoglycolate + (2R)-3-phosphoglycerate + 2 H(+). RuBisCO catalyzes two reactions: the carboxylation of D-ribulose 1,5-bisphosphate, the primary event in carbon dioxide fixation, as well as the oxidative fragmentation of the pentose substrate in the photorespiration process. Both reactions occur simultaneously and in competition at the same active site. The protein is Ribulose bisphosphate carboxylase large chain of Cichorium intybus (Chicory).